A 58-amino-acid polypeptide reads, in one-letter code: Small ribosomal subunit protein bS21 (58 aa).

Residues 36 to 58 are disordered; that stretch reads EFYEKPSVKRKRKSEAARKRKKF. The span at 43 to 58 shows a compositional bias: basic residues; sequence VKRKRKSEAARKRKKF.

It belongs to the bacterial ribosomal protein bS21 family.

The chain is Small ribosomal subunit protein bS21 from Streptococcus uberis (strain ATCC BAA-854 / 0140J).